Here is a 683-residue protein sequence, read N- to C-terminus: Zinc finger protein 418 (683 aa).

Positions 48-123 constitute a KRAB domain; sequence VTIEDVTVYF…TPKQGQLRQK (76 aa). Positions 102-120 are enriched in polar residues; it reads QSLSQTEAPQVRTPKQGQL. 2 disordered regions span residues 102–124 and 209–247; these read QSLSQTEAPQVRTPKQGQLRQKP and DIPNGEKQNKIKRGKAFHRDKNNSESDEYKKSSSPQHRL. Positions 225–239 are enriched in basic and acidic residues; it reads FHRDKNNSESDEYKK. 14 consecutive C2H2-type zinc fingers follow at residues 287–309, 315–337, 343–365, 371–393, 399–421, 427–449, 455–477, 483–505, 511–533, 539–561, 567–589, 595–617, 623–645, and 651–673; these read YECHVCGKWFGQKATLRIHQRRH, YKCGECGKSFCQSSNLSEHCRVH, FECLECGKAFGCHSSLLRHQRTH, YECSDCGRLFRQIVSLITHQRTH, YECGQCEKSFSHKATLTVHQRVH, YHCEACGKSFSQSANLIKHSKIH, YECGECGLCFRQRATLMKHQRTH, YECRECGKFFKQYFYLIEHRRIH, YECEQCGKSYTQKATLIRHQRVH, YKCEECGKAFEYKSRLKRHQRTH, YECAKCGKFFRESYNLAEHQKIH, YHCDQCGKCFSRRADLVKHQRVH, YTCGECGKTFSRTTNLVQHRRIH, and YECDQCGKSFSQVSTLTRHQLLH.

The protein belongs to the krueppel C2H2-type zinc-finger protein family.

The protein resides in the nucleus. Transcriptional repressor. May play a role as regulator of the ubiquitin-proteasome system and autophagy-lysosomal pathway. In Rattus norvegicus (Rat), this protein is Zinc finger protein 418.